The following is a 132-amino-acid chain: Holo-[acyl-carrier-protein] synthase (132 aa).

Mg(2+) is bound by residues D8 and E64.

It belongs to the P-Pant transferase superfamily. AcpS family. It depends on Mg(2+) as a cofactor.

The protein localises to the cytoplasm. The enzyme catalyses apo-[ACP] + CoA = holo-[ACP] + adenosine 3',5'-bisphosphate + H(+). In terms of biological role, transfers the 4'-phosphopantetheine moiety from coenzyme A to a Ser of acyl-carrier-protein. This chain is Holo-[acyl-carrier-protein] synthase, found in Shewanella sediminis (strain HAW-EB3).